The primary structure comprises 615 residues: 1-deoxy-D-xylulose-5-phosphate synthase (615 aa).

Residues His76 and 117–119 (GHS) each bind thiamine diphosphate. A Mg(2+)-binding site is contributed by Asp148. Thiamine diphosphate is bound by residues 149–150 (GA), Asn177, Tyr284, and Glu365. Mg(2+) is bound at residue Asn177.

Belongs to the transketolase family. DXPS subfamily. In terms of assembly, homodimer. It depends on Mg(2+) as a cofactor. Thiamine diphosphate is required as a cofactor.

The catalysed reaction is D-glyceraldehyde 3-phosphate + pyruvate + H(+) = 1-deoxy-D-xylulose 5-phosphate + CO2. Its pathway is metabolic intermediate biosynthesis; 1-deoxy-D-xylulose 5-phosphate biosynthesis; 1-deoxy-D-xylulose 5-phosphate from D-glyceraldehyde 3-phosphate and pyruvate: step 1/1. Catalyzes the acyloin condensation reaction between C atoms 2 and 3 of pyruvate and glyceraldehyde 3-phosphate to yield 1-deoxy-D-xylulose-5-phosphate (DXP). In Francisella tularensis subsp. mediasiatica (strain FSC147), this protein is 1-deoxy-D-xylulose-5-phosphate synthase.